The primary structure comprises 193 residues: CASP-like protein 2D1 (193 aa).

Residues 1-24 (MRANNNNTREEERSSSSKQQQPQA) are disordered. At 1-29 (MRANNNNTREEERSSSSKQQQPQAHMSLK) the chain is on the cytoplasmic side. A helical transmembrane segment spans residues 30 to 50 (IIDSCLRLSVVPLSVATIWLT). Residues 51–73 (VTNHESNPDYGNLDYNSIMGLKY) lie on the Extracellular side of the membrane. Residues 74–94 (MVGVSAISAIYALLSTISLWV) form a helical membrane-spanning segment. At 95-109 (TCLVSKAWLFFVPDQ) the chain is on the cytoplasmic side. The chain crosses the membrane as a helical span at residues 110–132 (VLAYVMTTSVAGATEIVYLLNKG). Over 133 to 151 (DKIVTWSEMCSSYPHYCSK) the chain is Extracellular. Residues 152–172 (LTIALGLHVFVLFFFLFLSVI) traverse the membrane as a helical segment. Topologically, residues 173–193 (SAYRAFSPFDPPCDSQTNIDA) are cytoplasmic.

This sequence belongs to the Casparian strip membrane proteins (CASP) family. As to quaternary structure, homodimer and heterodimers.

The protein resides in the cell membrane. This Arabidopsis lyrata subsp. lyrata (Lyre-leaved rock-cress) protein is CASP-like protein 2D1.